A 61-amino-acid polypeptide reads, in one-letter code: Alpha-conotoxin-like Lp1.6a (61 aa).

The first 21 residues, 1-21 (MGMRMMFIIFLFVVLATTVVS), serve as a signal peptide directing secretion. Positions 22–44 (FTSGRASDGRNAPANNKVSDLIR) are excised as a propeptide. Residue Gln-45 is modified to Pyrrolidone carboxylic acid. 2 cysteine pairs are disulfide-bonded: Cys-47/Cys-53 and Cys-48/Cys-60. At Cys-60 the chain carries Cysteine amide.

This sequence belongs to the conotoxin A superfamily. Expressed by the venom duct.

Its subcellular location is the secreted. Its function is as follows. Alpha-conotoxins act on postsynaptic membranes, they bind to the nicotinic acetylcholine receptors (nAChR) and thus inhibit them. The polypeptide is Alpha-conotoxin-like Lp1.6a (Conus leopardus (Leopard cone)).